Reading from the N-terminus, the 197-residue chain is Nucleoside triphosphate pyrophosphatase (197 aa).

Residue aspartate 72 is the Proton acceptor of the active site.

It belongs to the Maf family. A divalent metal cation serves as cofactor.

The protein resides in the cytoplasm. It carries out the reaction a ribonucleoside 5'-triphosphate + H2O = a ribonucleoside 5'-phosphate + diphosphate + H(+). The catalysed reaction is a 2'-deoxyribonucleoside 5'-triphosphate + H2O = a 2'-deoxyribonucleoside 5'-phosphate + diphosphate + H(+). Nucleoside triphosphate pyrophosphatase. May have a dual role in cell division arrest and in preventing the incorporation of modified nucleotides into cellular nucleic acids. This is Nucleoside triphosphate pyrophosphatase from Corynebacterium glutamicum (strain ATCC 13032 / DSM 20300 / JCM 1318 / BCRC 11384 / CCUG 27702 / LMG 3730 / NBRC 12168 / NCIMB 10025 / NRRL B-2784 / 534).